Here is a 445-residue protein sequence, read N- to C-terminus: MANRKYFGTDGVRGKVGSYPITPDFALKLGWAAGKVLASQGSKMVLIGKDTRISGYMLESALEAGLAAAGLSAAFTGPMPTPAIAYLTRTFRAEAGIVISASHNPYYDNGIKFFSAKGTKLPDEIEEAIEAMLEQPMDCVESAELGKASRINDAAGRYIEFCKGTFPAHLGLEGYKIVVDCANGATYHIAPNVLRELGAEVIEIGTDPNGLNINEKCGATDVTALQAKVVETKADVGLAYDGDGDRIMMVDHLGNKVDGDQILFIIAREALRSGQLKGGVVGTLMSNMSLEIALKMLGVPFLRANVGDRYVLEKMLENDWTLGGENSGHIIIADKNTTGDGIVASLAVLAAMAQHKLSLNELASAVKLFPQVLINVRFAGGENPLESDAVKSVAAEVEKRLEGKGRILLRKSGTEPLIRVMVECQDAELAQQCAEEIAEAVKKIN.

The Phosphoserine intermediate role is filled by Ser102. Mg(2+) contacts are provided by Ser102, Asp241, Asp243, and Asp245. Ser102 is modified (phosphoserine).

The protein belongs to the phosphohexose mutase family. It depends on Mg(2+) as a cofactor. In terms of processing, activated by phosphorylation.

It carries out the reaction alpha-D-glucosamine 1-phosphate = D-glucosamine 6-phosphate. Functionally, catalyzes the conversion of glucosamine-6-phosphate to glucosamine-1-phosphate. The protein is Phosphoglucosamine mutase of Haemophilus influenzae (strain 86-028NP).